The primary structure comprises 526 residues: Choline/ethanolamine transporter FLVCR2 (526 aa).

A disordered region spans residues 1-70 (MVNEGPNQEE…PSGLAHPSSS (70 aa)). Topologically, residues 1–76 (MVNEGPNQEE…PSSSGPEDLS (76 aa)) are cytoplasmic. 1 to 84 (MVNEGPNQEE…LSVIKVSRRR (84 aa)) is a binding site for heme b. Tandem repeats lie at residues 25 to 30 (PSVSVH), 31 to 36 (PSVSVH), 37 to 42 (PSVSIN), 43 to 48 (PSVSVH), and 49 to 54 (PSSSAH). A compositionally biased stretch (low complexity) spans 25–56 (PSVSVHPSVSVHPSVSINPSVSVHPSSSAHPS). Residues 25-72 (PSVSVHPSVSVHPSVSINPSVSVHPSSSAHPSALAQPSGLAHPSSSGP) are 8 X 6 AA tandem repeats of P-S-[VS]-S-[VIAG]-[HNP]. The stretch at 55-60 (PSALAQ) is one 6; approximate repeat. A 7; approximate repeat occupies 61–66 (PSGLAH). Residues 67 to 72 (PSSSGP) form repeat 8. The chain crosses the membrane as a helical span at residues 77–101 (VIKVSRRRWAVVLVFSCYSMCNSFQ). 2 residues coordinate choline: Asn-98 and Trp-102. Residues 102-119 (WIQYGSINNIFMHFYGVS) lie on the Extracellular side of the membrane. Residues 120-147 (AFAIDWLSMCYMLTYIPLLLPVAWLLEK) form a helical membrane-spanning segment. The Cytoplasmic portion of the chain corresponds to 148-149 (FG). The chain crosses the membrane as a helical span at residues 150–169 (LRTIALTGSALNCLGAWVKL). Residues 170–176 (GSLKPHL) are Extracellular-facing. The helical transmembrane segment at 177 to 205 (FPVTVVGQLICSVAQVFILGMPSRIASVW) threads the bilayer. Gln-191 and Leu-195 together coordinate choline. The Cytoplasmic segment spans residues 206 to 210 (FGANE). Residues 211 to 236 (VSTACSVAVFGNQLGIAIGFLVPPVL) traverse the membrane as a helical segment. At 237–241 (VPNIE) the chain is on the extracellular side. A helical membrane pass occupies residues 242–271 (DRDELAYHISIMFYIIGGVATLLLILVIIV). At 272–307 (FKEKPKYPPSRAQSLSYALTSPDASYLGSIARLFKN) the chain is on the cytoplasmic side. Residues 308 to 338 (LNFVLLVITYGLNAGAFYALSTLLNRMVIWH) traverse the membrane as a helical segment. Tyr-325 contacts choline. Residues 339 to 342 (YPGE) are Extracellular-facing. The chain crosses the membrane as a helical span at residues 343–371 (EVNAGRIGLTIVIAGMLGAVISGIWLDRS). At 372–373 (KT) the chain is on the cytoplasmic side. Residues 374–396 (YKETTLVVYIMTLVGMVVYTFTL) traverse the membrane as a helical segment. Residues 397 to 399 (NLG) are Extracellular-facing. A helical membrane pass occupies residues 400-429 (HLWVVFITAGTMGFFMTGYLPLGFEFAVEL). Topologically, residues 430–437 (TYPESEGI) are cytoplasmic. A helical transmembrane segment spans residues 438 to 463 (SSGLLNISAQVFGIIFTISQGQIIDN). Gln-447 is a binding site for choline. Topologically, residues 464–465 (YG) are extracellular. Residues 466-488 (TKPGNIFLCVFLTLGAALTAFIK) traverse the membrane as a helical segment. Topologically, residues 489–526 (ADLRRQKANKETLENKLQEEEEESNTSKVPTAVSEDHL) are cytoplasmic. The disordered stretch occupies residues 500–526 (TLENKLQEEEEESNTSKVPTAVSEDHL). Position 515 is a phosphoserine (Ser-515).

It belongs to the major facilitator superfamily. Feline leukemia virus subgroup C receptor (TC 2.A.1.28.1) family. Interacts with components of electron transfer chain complexes III, IV and V including CYC1, NDUFA4, COX4I1, ATP5PD and ATP5F1C; these interactions occur in the absence of heme and are disrupted upon heme binding. Interacts with ATP2A2; this interaction occurs in the absence of heme and promotes ATP2A2 proteasomal degradation; the complex is dissociated upon heme binding. Interacts with HMOX1; this interaction is potentiated in the presence of heme. As to expression, expressed in non-hematopoietic tissues, with relative abundant expression in brain, placenta, lung, liver and kidney. Also expressed in hematopoietic tissues (fetal liver, spleen, lymph node, thymus, leukocytes and bone marrow). Found in acidophil cells of the pituitary that secrete growth hormone and prolactin (at protein level).

The protein resides in the cell membrane. The protein localises to the mitochondrion membrane. It is found in the endoplasmic reticulum membrane. The enzyme catalyses choline(out) = choline(in). It catalyses the reaction ethanolamine(in) = ethanolamine(out). It carries out the reaction heme b(in) = heme b(out). Functionally, choline uniporter that specifically mediates choline uptake at the blood-brain-barrier. Responsible for the majority of choline uptake across the blood-brain-barrier from the circulation into the brain. Choline, a nutrient critical for brain development, is a precursor of phosphatidylcholine, as well as betaine. Also mediates transport of ethanolamine. Choline and ethanolamine transport is not coupled with proton transport and is exclusively driven by the choline gradient across the plasma membrane. However, the presence of an inwardly directed proton gradient enhances choline uptake. Also acts as a heme b transporter. Required to regulate mitochondrial respiration processes, ATP synthesis and thermogenesis. At low heme levels, interacts with components of electron transfer chain (ETC) complexes and ATP2A2, leading to ubiquitin-mediated degradation of ATP2A2 and inhibition of thermogenesis. Upon heme binding, dissociates from ETC complexes to allow switching from mitochondrial ATP synthesis to thermogenesis. This chain is Choline/ethanolamine transporter FLVCR2, found in Homo sapiens (Human).